Consider the following 219-residue polypeptide: Probable nicotinate-nucleotide adenylyltransferase (219 aa).

This sequence belongs to the NadD family.

It catalyses the reaction nicotinate beta-D-ribonucleotide + ATP + H(+) = deamido-NAD(+) + diphosphate. The protein operates within cofactor biosynthesis; NAD(+) biosynthesis; deamido-NAD(+) from nicotinate D-ribonucleotide: step 1/1. Its function is as follows. Catalyzes the reversible adenylation of nicotinate mononucleotide (NaMN) to nicotinic acid adenine dinucleotide (NaAD). The protein is Probable nicotinate-nucleotide adenylyltransferase of Cronobacter sakazakii (strain ATCC BAA-894) (Enterobacter sakazakii).